Reading from the N-terminus, the 462-residue chain is uncharacterized protein (462 aa).

The 59-residue stretch at 12 to 70 folds into the TRAM domain; that stretch reads MLKKNDIIQVAISDLSHEGAGVAKHDGFVFFVDNALPEEVIDMRVLKVNKNSGFGKVEA. S-adenosyl-L-methionine contacts are provided by Gln-294, Tyr-323, Glu-344, and Asp-392. Cys-419 acts as the Nucleophile in catalysis.

It belongs to the class I-like SAM-binding methyltransferase superfamily. RNA M5U methyltransferase family.

This is an uncharacterized protein from Streptococcus pyogenes serotype M18 (strain MGAS8232).